The sequence spans 41 residues: MKVRNSLKSLRTRHRDNRLVRRKGRVYIINKTQKRYKARQG.

It belongs to the bacterial ribosomal protein bL36 family.

The chain is Large ribosomal subunit protein bL36 from Beijerinckia indica subsp. indica (strain ATCC 9039 / DSM 1715 / NCIMB 8712).